Consider the following 793-residue polypeptide: Sucrose synthase (793 aa).

Residues 263–742 (MISRILIVSI…ALARVAERYT (480 aa)) are GT-B glycosyltransferase.

The protein belongs to the glycosyltransferase 1 family. In terms of assembly, homotetramer.

The enzyme catalyses an NDP-alpha-D-glucose + D-fructose = a ribonucleoside 5'-diphosphate + sucrose + H(+). The catalysed reaction is ADP-alpha-D-glucose + D-fructose = sucrose + ADP + H(+). Its function is as follows. Catalyzes the reversible conversion of sucrose and a nucleotide disphosphate (NDP) into fructose and NDP-glucose; although the reaction is freely reversible in vitro, the physiological reaction seems to be sucrose cleavage. Unlike characterized plant enzymes prefers ADP as a cosubstrate, whereas plants prefer UDP. The KM for sucrose is 45-fold lower in the presence of ADP than UDP. Its preference for ADP over UDP suggests it may directly link sucrose and glycogen metabolism. The protein is Sucrose synthase of Acidithiobacillus caldus (strain ATCC 51756 / DSM 8584 / KU).